The chain runs to 145 residues: Synaptojanin-2-binding protein (145 aa).

The Cytoplasmic segment spans residues 1–117; that stretch reads MNGRVDYLVS…VHRGDGEPSG (117 aa). One can recognise a PDZ domain in the interval 13 to 100; it reads EINLTRGPSG…AVSLRVQHRL (88 aa). A helical membrane pass occupies residues 118-138; that stretch reads VPVAVVLLPVFALTLVAVWAF. At 139–145 the chain is on the mitochondrial intermembrane side; sequence VRYRKQL.

As to quaternary structure, binds (via the PDZ domain) to isoform 2A of SYNJ2 (via the unique motif in the C-terminus). Interacts (via C-terminus) with RALBP1. Interacts (via PDZ domain) with ACVR2A (via C-terminus) and ACVR2B (via C-terminus). Forms a ternary complex with ACVR2A and RALBP1. Interacts with MAPK12. Interacts with DLL1; enhances DLL1 protein stability, and promotes notch signaling in endothelial cells. Widely expressed.

It is found in the mitochondrion outer membrane. Regulates endocytosis of activin type 2 receptor kinases through the Ral/RALBP1-dependent pathway and may be involved in suppression of activin-induced signal transduction. This is Synaptojanin-2-binding protein (Synj2bp) from Rattus norvegicus (Rat).